Here is a 308-residue protein sequence, read N- to C-terminus: N-acetylgalactosamine kinase AgaK (308 aa).

ATP contacts are provided by residues 4–11 (GLDIGGTK) and 132–139 (GTGGGLCI). His-156, Cys-174, Cys-176, and Cys-181 together coordinate Zn(2+).

It belongs to the ROK (NagC/XylR) family.

The protein localises to the cytoplasm. The enzyme catalyses N-acetyl-D-galactosamine + ATP = N-acetyl-D-galactosamine 6-phosphate + ADP + H(+). It catalyses the reaction N-acetyl-D-glucosamine + ATP = N-acetyl-D-glucosamine 6-phosphate + ADP + H(+). Involved in the pathway of N-acetyl-D-galactosamine degradation. Catalyzes the phosphorylation of N-acetyl-D-galactosamine (GalNAc) to yield D-galactosamine 6-phosphate (GalN-6-P). It can also phosphorylate N-acetylglucosamine (GlcNAc). The protein is N-acetylgalactosamine kinase AgaK of Shewanella sp. (strain ANA-3).